Here is a 585-residue protein sequence, read N- to C-terminus: MVYLAILLALAHTVGRSAAGAVDSFDYIIVGAGTSGLVVANRLSEDPSVTVAVIEPGTDQRDNINVTSTTAFGNSFGTAIDWAYSTTKQHEAGNKELPLHAGKAWGGTSTINGMTYIRGNVAEFDAWERLGNPGWNWAALLPYFKKSERYHIPTESQLAAGATFESRYHGFDGPLHVGYIPALENGSYAPLVIDTWEGLSVAHNPDLNSGSVRGFGMGPQTLDTGSNVRWDAARAYYHPVEQRSNLRILKGTVKRITWAKGKGKKGTLVANGVEVLNEKGKSTTLAAKTEVVVSAGALRTPLVLEASGIGNPRILKSLGVETQISLPGVGENLVEQPSHFLSFSANLPIAWSAYHAYVTASDIFGANTSAVEAETRANIPRYARAAAEASGAGSVNARAVEKLLQVQHELIFKHNATVAEILISIYGGGFSNYWTLFPFSRGSVHLKSLDHINEPMVDPRIFLADFDLFTLTAAGKFTKRFWFSEPMKTQASVTGPVGLPHNATDEQWHANLRDTVSANSHPIGTAAMMARDLGGVVDKELKVYGTANVRVVDASVIPMQVSGHLTAALYGVAERAADIIKGAAH.

Ala104 contributes to the FAD binding site. His521 acts as the Proton donor in catalysis. His564 acts as the Proton acceptor in catalysis.

This sequence belongs to the GMC oxidoreductase family. Monomer. FAD is required as a cofactor.

Glucose oxidase-like protein; part of the gene cluster that mediates the biosynthesis of the enfumafungin-type antibiotic fuscoatroside. Four enzymes are sufficient to produce fuscoatroside: the terpene cyclase-glycosyl transferase fusion protein fsoAthe cytochrome P450 monoxygenases fsoD and fsoE, and the acetyltransferase fsoF; the cytochrome P450 monooxygenase fsoB and the glucose oxidase-like protein fsoC do not seem to play a role in biosynthesis of fuscoatroside. In terms of biological role, glucose oxidase; part of the gene cluster that mediates the biosynthesis of the enfumafungin-type antibiotic, fuscoatroside. This Humicola fuscoatra protein is Glucose oxidase-like protein fsoC.